Reading from the N-terminus, the 78-residue chain is Sec-independent protein translocase protein TatA (78 aa).

A helical membrane pass occupies residues 1-21 (MGSLSIWHWIVVIGVVLLLFG). Over residues 42–60 (GLQDDEKTAEKPEPVKSID) the composition is skewed to basic and acidic residues. The segment at 42-78 (GLQDDEKTAEKPEPVKSIDHTAPPAAAPRTDVGSKVV) is disordered.

Belongs to the TatA/E family. As to quaternary structure, the Tat system comprises two distinct complexes: a TatABC complex, containing multiple copies of TatA, TatB and TatC subunits, and a separate TatA complex, containing only TatA subunits. Substrates initially bind to the TatABC complex, which probably triggers association of the separate TatA complex to form the active translocon.

The protein localises to the cell inner membrane. Part of the twin-arginine translocation (Tat) system that transports large folded proteins containing a characteristic twin-arginine motif in their signal peptide across membranes. TatA could form the protein-conducting channel of the Tat system. This is Sec-independent protein translocase protein TatA from Rhodopseudomonas palustris (strain BisB18).